Reading from the N-terminus, the 2493-residue chain is MVTPAASQDPPAIPARQNASATAAMAVNAKDTVEQERNVVLLFGCQWLTFTASDFRQLRKAVLDNPELHWMLDVLSELPGYYRAAAGTSCVPSLRAIRGEEDLRELERWFRCDDLSTAKFPLCYTQLAPLLMMTHFVQYSQWLKMQPNGRNPVVEIVGFCIGLLSSIAVSATRMGSLKMYGSVAMRLAMLLGAMGDLQQAGEEYTSLAIGWKRPELEDELPAERALTEQSYITVQYDENRATIMAPRRSVAALQQTLQSAGFSANAVEYNGRYHWPGHEKSLTPLIHLCNTHSGLQLPDASELLHPPRANSTAEPVRSGCLHELVLRAVLAQQCLWHKTFSAVYREHLTTPSSIVVEFGPERCVPPTLFRRLPQRIVHFADVELPATISRDHELATRPPAETDIAIVGMACRVAGADDLDEFWDLLCSGQSQHREMPRERYANYETPWRPEASHRSWLGNFVRDIDAFDHKFFRKSPREAMSQDPQQRLMLQVAYQALESAGYFSQPSPGKDIGCFIATCTVDYEHNVNCHPASAYAATGLLRSFLAGKLSHHFGWRGPSLCVDTACSGSAVALHHACRAILSGDCTAALVGGANAITSPLAYDNLAGASFLSPTGPCKPFDAKADGYCRGEGFAAIYIKKLSHAIADGDQVLATIASTAVEQNDNCTPIVVPDTASLAGLFKKVTQRAHLHSRDISIVEAHGTGTQAGDPAEYESVRDVLGGPRRVGNLALGSVKGLVGHTEGVSGIIALCKVVLMILNGQIPPQPGFHSLNPHIRAMPDDHIEIGTRVKPWEVGFRAALINNYGACGSNASMVITQGPQKDEVQERGIHAENVALPFRVCGLDKARLQAYAARLRRFLSRSERGISFANIAFNLTRKSNPALECQCVFQTRSESELKDILTGLEEGDNKYIIQVKKPKRPLVLCFGGQVGRSIGLDRTFYNAFPLFKHHLDSCDDILKANGDSSIYPGIFATAPVLDIVQLHTQLFALQYACARSWMDCGVEVTAVIGHSFGELTALCISGALSLPDALTLIVRRAVLIRDKWGADPGAMLAVEGDRSTLEKHLESSSANIACFNGPRSFTVAGPTAVIDFLQEELGADSAFRLKRLEVTNAFHSTLVDPLLPALASAIDGLALNTATIPIERATEHQAADTIPLSIVADHLRQPVYFNNAVQRLAARHGPAIWLEAGSNSTITSLARRALGLGVSGNTFHSVNVTSTSALMNLTDVTVGLWSDNVPCTFWGYHARQTREYAPLLLPPYQFERTRHWMENKPLPLKYNQAQAVMEVSGHTAAKTAPIAPATLLLDYAIELLRSLPNNQRKIPRVFDVGSDAPLLLDSNREVWIEVSAEDDKRTWALRFQSQTKGGQSDSRLLHCTAHISMHDVRCSRLQTEFTQYARLVSHARCADLLTDPEVDDILQGRNVYRSFAEIVEYSEQYQGVKRLVGKGRESAGRVVKSYSGKTWADPFLCDSFSQCAGFWVNCMTDRAEDEVYVASGIEQWMRTPLYADMATARPDTWHVWARHQQSEGLYTSDVFVFTPDGELVEMFLGLRYSRVAKSLFTRLLRGSTLKVDCRTKDTANQENNSIKDLVSRVKAVVAEICAVKPSEIQDDSHLADAGVDSLMAMELARELEVAFKCTIALEALVEAETFHDLVQAVQSALGETYEDSSVCSGNQCSTTDEATEFPSTSWSITSVSDTADLVLPLDGVLDALDETKGLTDQFLADNKCSGRLLNFTPLMVEMCIVLTLEALEELGSNIRSARANDRLPRIEFDTQHGPLVEYLYGRLLEAGLIKLDGSTVIRTEICAPTESSSTLLHKIEREYPEYGGASKLTFYTGSRLASVLRGEQDGLQLIFGTAEGQRLVSWMYGDEPHNVAGYKLMGEFIRRLVDKLPPAAAREGMTLRILEMGAGTGGGTKWMLPLLAALPVPVEYTFSDISPAFLAQARRKFRDYQFVRYCVHDIEKPPSEDLGKYHIIMASNAVHATSNLQVSTGNMRQALRPDGVLMLLEMTRPVFAIDLVFGLFRGWWVFNDGRTHAITNEQRWKDDLQAVGYGHVDWTDGESNEVGVQRVIFATAGGEQYHPVSPQEDAARLRTVVEYVYQHTAGFTMPALPPRIRAPANHACILVTGATGSLGSHLVARLVQLSNVQAVICLNRVSRMGPRVRQKEAVAARGLSLESKEETKLMVIETDTANDRMGLSVEQCRYLQENVTHIIHNAWPMNGAAPLSKFEGQFRALRNLIDLARCIATAQRHPVRFQFISSIGTVNGGGALEERTRIEQVMSNGYNEAKFVCERMIHETLQRYPAVFQATIVRPGQISGSEETGYWNTAEHFPAMVKSSQSLGAFPSLAGRLGWTPVDVAARIIAELLLDEGIPEEIYHVDHPTGQNWTTVVDVLAEELEATEVPFKDWIQRVRNRGGSRENPAGFMADWLETNFERMSCQGPLDTRVARRHSKTLREMGGGGGDEHVRRVVRSWKECGFLTQAQTRQGIP.

Positions 129 to 243 (PLLMMTHFVQ…VQYDENRATI (115 aa)) are N-terminal acylcarrier protein transacylase domain (SAT). C160 acts as the Nucleophile; for transacylase activity in catalysis. H274 serves as the catalytic Proton donor/acceptor; for transacylase activity. Positions 401–818 (ETDIAIVGMA…GSNASMVITQ (418 aa)) constitute a Ketosynthase family 3 (KS3) domain. Catalysis depends on for beta-ketoacyl synthase activity residues C567, H702, and H741. The interval 926 to 1261 (CFGGQVGRSI…EYAPLLLPPY (336 aa)) is malonyl-CoA:ACP transacylase (MAT). Residues 1259 to 1387 (PPYQFERTRH…AHISMHDVRC (129 aa)) form an N-terminal hotdog fold region. A PKS/mFAS DH domain is found at 1259–1562 (PPYQFERTRH…YSRVAKSLFT (304 aa)). H1291 serves as the catalytic Proton acceptor; for dehydratase activity. The interval 1297–1558 (APIAPATLLL…LGLRYSRVAK (262 aa)) is product template (PT) domain. The interval 1415–1562 (VDDILQGRNV…YSRVAKSLFT (148 aa)) is C-terminal hotdog fold. The active-site Proton donor; for dehydratase activity is the D1471. Residues 1588-1662 (KDLVSRVKAV…DLVQAVQSAL (75 aa)) form the Carrier domain. S1622 carries the O-(pantetheine 4'-phosphoryl)serine modification. The tract at residues 1822–2063 (REYPEYGGAS…YGHVDWTDGE (242 aa)) is methyltransferase (CMeT) domain. The segment at 2128–2366 (VTGATGSLGS…TPVDVAARII (239 aa)) is NADPH-binding domain.

Pantetheine 4'-phosphate serves as cofactor.

The catalysed reaction is decanoyl-[ACP] + 4 malonyl-CoA + AH2 + S-adenosyl-L-methionine + 3 H(+) = 2,4-dihydroxy-3-methyl-6-(2-oxoundecyl)benzaldehyde + holo-[ACP] + A + S-adenosyl-L-homocysteine + 4 CO2 + 4 CoA + H2O. Its pathway is secondary metabolite biosynthesis. Non-reducing polyketide synthase; part of the pki gene cluster that mediates the biosynthesis of 2,4-dihydroxy-3-methyl-6-(2-oxoundecyl)benzaldehyde. The first step in the pathway is the generation of the decanoyl starter unit by the FAS composed of subunits pkiB and pkiC, which is then transferred directly from the FAS to the SAT domain of the non-reducing polyketide synthase pkiA. PkiA condenses the decanoyyl starter unit with 4 malonyl-CoA units and performs one methylation step to yield 2,4-dihydroxy-3-methyl-6-(2-oxoundecyl)benzaldehyde. The protein is Non-reducing polyketide synthase pkiA of Emericella nidulans (strain FGSC A4 / ATCC 38163 / CBS 112.46 / NRRL 194 / M139) (Aspergillus nidulans).